The following is a 665-amino-acid chain: LisH domain-containing protein ARMC9 (665 aa).

The 33-residue stretch at His7 to Gly39 folds into the LisH domain. A coiled-coil region spans residues Glu201–Gln235. Phosphoserine is present on Ser582. The segment at Val642–Val665 is disordered.

In terms of assembly, interacts with TOGARAM1, CCDC66, CEP104, CSPP1 and CEP290. Interacts with NDUFAF2.

Its subcellular location is the cytoplasm. The protein resides in the cytoskeleton. It localises to the cilium basal body. The protein localises to the cell projection. It is found in the cilium. Its subcellular location is the microtubule organizing center. The protein resides in the centrosome. It localises to the centriole. Its function is as follows. Involved in ciliogenesis. It is required for appropriate acetylation and polyglutamylation of ciliary microtubules, and regulation of cilium length. Acts as a positive regulator of hedgehog (Hh)signaling. May participate in the trafficking and/or retention of GLI2 and GLI3 proteins at the ciliary tip. This Pongo abelii (Sumatran orangutan) protein is LisH domain-containing protein ARMC9 (ARMC9).